We begin with the raw amino-acid sequence, 308 residues long: ADP-L-glycero-D-manno-heptose-6-epimerase (308 aa).

Residues 10-11, 31-32, lysine 38, lysine 53, 75-79, and asparagine 92 each bind NADP(+); these read MI, DN, and EGACS. Tyrosine 139 (proton acceptor) is an active-site residue. Lysine 143 is a binding site for NADP(+). Residue asparagine 168 coordinates substrate. NADP(+)-binding residues include valine 169 and lysine 177. Residue lysine 177 is the Proton acceptor of the active site. Residues serine 179, histidine 186, 200–203, arginine 208, and tyrosine 271 contribute to the substrate site; that span reads FAGS.

Belongs to the NAD(P)-dependent epimerase/dehydratase family. HldD subfamily. Homopentamer. NADP(+) is required as a cofactor.

The enzyme catalyses ADP-D-glycero-beta-D-manno-heptose = ADP-L-glycero-beta-D-manno-heptose. Its pathway is nucleotide-sugar biosynthesis; ADP-L-glycero-beta-D-manno-heptose biosynthesis; ADP-L-glycero-beta-D-manno-heptose from D-glycero-beta-D-manno-heptose 7-phosphate: step 4/4. Catalyzes the interconversion between ADP-D-glycero-beta-D-manno-heptose and ADP-L-glycero-beta-D-manno-heptose via an epimerization at carbon 6 of the heptose. The chain is ADP-L-glycero-D-manno-heptose-6-epimerase from Mannheimia succiniciproducens (strain KCTC 0769BP / MBEL55E).